We begin with the raw amino-acid sequence, 174 residues long: Magnetosome protein MamT (174 aa).

Residues 1 to 9 (MGTPGGGRR) lie on the Cytoplasmic side of the membrane. The helical transmembrane segment at 10 to 28 (WMTLISITLLMVVGLGLYW) threads the bilayer. Residues 29-174 (DELSLSAGIS…EKKSGIKWLL (146 aa)) are Lumenal-facing. An MCR (magnetochrome) 1 motif is present at residues 87 to 107 (VMPGTGMPHPYVGDCIQCHLM). Positions 101, 104, 105, 152, 155, and 156 each coordinate heme. The MCR 2 motif lies at 138–158 (ILPTTRQPHPPAGRCIKCHDI).

Belongs to the magnetosome MamT family. Heme is required as a cofactor.

The protein localises to the magnetosome membrane. Its function is as follows. May play a role in magnetite crystal maturation. May transfer electrons to balance the Fe(2+)-Fe(3+) ratio during magnetite formation. This chain is Magnetosome protein MamT, found in Magnetospirillum gryphiswaldense (strain DSM 6361 / JCM 21280 / NBRC 15271 / MSR-1).